Here is a 136-residue protein sequence, read N- to C-terminus: Calmodulin-A (136 aa).

EF-hand domains are found at residues 1 to 36, 37 to 72, 74 to 109, and 110 to 136; these read EQIA…LGQN, PTEA…KMKD, DSEE…LGEK, and LTDE…EEFV. Ca(2+) contacts are provided by aspartate 14, aspartate 16, aspartate 18, threonine 20, glutamate 25, aspartate 50, aspartate 52, asparagine 54, threonine 56, glutamate 61, aspartate 87, aspartate 89, asparagine 91, tyrosine 93, and glutamate 98. The residue at position 109 (lysine 109) is an N6,N6,N6-trimethyllysine. Ca(2+) contacts are provided by aspartate 123, aspartate 125, aspartate 127, glutamine 129, and glutamate 134.

Belongs to the calmodulin family.

Calmodulin acts as part of a calcium signal transduction pathway by mediating the control of a large number of enzymes, ion channels, aquaporins and other proteins through calcium-binding. Calcium-binding is required for the activation of calmodulin. Among the enzymes to be stimulated by the calmodulin-calcium complex are a number of protein kinases, such as myosin light-chain kinases and calmodulin-dependent protein kinase type II (CaMK2), and phosphatases. The protein is Calmodulin-A (calm1) of Oryzias latipes (Japanese rice fish).